Here is a 506-residue protein sequence, read N- to C-terminus: Maturase K (506 aa).

Belongs to the intron maturase 2 family. MatK subfamily.

The protein localises to the plastid. The protein resides in the chloroplast. Its function is as follows. Usually encoded in the trnK tRNA gene intron. Probably assists in splicing its own and other chloroplast group II introns. The chain is Maturase K from Pisum sativum (Garden pea).